The sequence spans 1122 residues: Protein CAF130 (1122 aa).

The segment at 1–24 (MTKKKAATNYAERQNLASEDSSGD) is disordered. The segment covering 11-24 (AERQNLASEDSSGD) has biased composition (polar residues). Phosphoserine is present on Ser1042.

As to quaternary structure, subunit of the 1.0 MDa CCR4-NOT core complex that contains CCR4, CAF1, NOT1, NOT2, NOT3, NOT4, NOT5, CAF40 and CAF130. In the complex interacts with NOT1. The core complex probably is part of a less characterized 1.9 MDa CCR4-NOT complex.

It is found in the cytoplasm. The protein resides in the nucleus. Acts as a component of the CCR4-NOT core complex, which in the nucleus seems to be a general transcription factor, and in the cytoplasm the major mRNA deadenylase involved in mRNA turnover. The polypeptide is Protein CAF130 (CAF130) (Saccharomyces cerevisiae (strain ATCC 204508 / S288c) (Baker's yeast)).